Reading from the N-terminus, the 432-residue chain is Trigger factor (432 aa).

Residues 161–246 (EDRVTIDFTG…LKKVEERELP (86 aa)) enclose the PPIase FKBP-type domain.

The protein belongs to the FKBP-type PPIase family. Tig subfamily. As to quaternary structure, homodimer and monomer. In vivo most of the ribosomes are in complex with monomeric TF. Uncomplexed TF, however, is in a monomer-dimer equilibrium with approximately two thirds of TF existing in a dimeric state.

It localises to the cytoplasm. It carries out the reaction [protein]-peptidylproline (omega=180) = [protein]-peptidylproline (omega=0). Functionally, involved in protein export. Acts as a chaperone by maintaining the newly synthesized protein in an open conformation. Functions as a peptidyl-prolyl cis-trans isomerase. This is Trigger factor from Escherichia coli O6:K15:H31 (strain 536 / UPEC).